The following is a 130-amino-acid chain: Small ribosomal subunit protein uS8A (130 aa).

It belongs to the universal ribosomal protein uS8 family.

The protein is Small ribosomal subunit protein uS8A (RpS15Aa) of Drosophila melanogaster (Fruit fly).